Consider the following 216-residue polypeptide: Probable nicotinate-nucleotide adenylyltransferase (216 aa).

The protein belongs to the NadD family.

It catalyses the reaction nicotinate beta-D-ribonucleotide + ATP + H(+) = deamido-NAD(+) + diphosphate. It functions in the pathway cofactor biosynthesis; NAD(+) biosynthesis; deamido-NAD(+) from nicotinate D-ribonucleotide: step 1/1. Its function is as follows. Catalyzes the reversible adenylation of nicotinate mononucleotide (NaMN) to nicotinic acid adenine dinucleotide (NaAD). The protein is Probable nicotinate-nucleotide adenylyltransferase of Klebsiella pneumoniae (strain 342).